We begin with the raw amino-acid sequence, 214 residues long: Uridine kinase (214 aa).

Residue 15-22 (GASASGKS) participates in ATP binding.

It belongs to the uridine kinase family.

The protein resides in the cytoplasm. The enzyme catalyses uridine + ATP = UMP + ADP + H(+). It catalyses the reaction cytidine + ATP = CMP + ADP + H(+). Its pathway is pyrimidine metabolism; CTP biosynthesis via salvage pathway; CTP from cytidine: step 1/3. It functions in the pathway pyrimidine metabolism; UMP biosynthesis via salvage pathway; UMP from uridine: step 1/1. This is Uridine kinase from Aeromonas hydrophila subsp. hydrophila (strain ATCC 7966 / DSM 30187 / BCRC 13018 / CCUG 14551 / JCM 1027 / KCTC 2358 / NCIMB 9240 / NCTC 8049).